Here is a 319-residue protein sequence, read N- to C-terminus: 12-(S)-hydroxy-5,8,10,14-eicosatetraenoic acid receptor (319 aa).

The Extracellular segment spans residues 1-16 (MERTNCSAASTVVETA). A glycan (N-linked (GlcNAc...) asparagine) is linked at Asn5. The chain crosses the membrane as a helical span at residues 17-37 (VGTMLTLECVLGLMGNAVALW). Over 38–52 (TFFYRLKVWKPYAVY) the chain is Cytoplasmic. The helical transmembrane segment at 53–73 (LFNLVVADLLLATSLPFFAAF) threads the bilayer. Residues 74–91 (YLKGKTWKLGHMPCQVLL) lie on the Extracellular side of the membrane. A helical membrane pass occupies residues 92 to 110 (FLLAFSRGVGVAFLTTVAL). The Cytoplasmic portion of the chain corresponds to 111–131 (DRYLRVVHPRLRVNLLSLRAA). A helical transmembrane segment spans residues 132 to 152 (WGISSLIWLLMVVLTPQNLLT). The Extracellular segment spans residues 153-180 (CRTTQNSTECPSFYPTGGAKAIATCQEV). The helical transmembrane segment at 181–201 (LFFLQVLLPFGLISFCNSGLI) threads the bilayer. Over 202–219 (RTLQKRLRESDKQPRIRR) the chain is Cytoplasmic. A helical membrane pass occupies residues 220–240 (ARVLVAIVLLLFGLCFLPSVL). The Extracellular segment spans residues 241–265 (TRVLVHIFQEFKSCSVQQAIVRASD). The helical transmembrane segment at 266–284 (IAGSLTCLHSTLSPAIYCF) threads the bilayer. At 285-319 (SNPAFTHSYRKVLKSLRGRRKAAESPSDNLRDSYS) the chain is on the cytoplasmic side.

This sequence belongs to the G-protein coupled receptor 1 family. As to quaternary structure, interacts with KRAS; in a farnesylation-dependent manner.

Its subcellular location is the cell membrane. In terms of biological role, high-affinity receptor for 12-(S)-hydroxy-5,8,10,14-eicosatetraenoic acid (12-S-HETE), with much lower affinities for other HETE isomers. 12-S-HETE is a eicosanoid, a 12-lipoxygenase (ALOX12) metabolite of arachidonic acid, involved in many physiologic and pathologic processes, such as cell growth, adhesion, inflammation and cancer promotion. 12-S-HETE-binding leads to activation of ERK1/2 (MAPK3/MAPK1), MEK, and NF-kappa-B pathways and leads to cell growth. Plays a crucial role for proliferation, survival and macropinocytosis of KRAS-dependent cancer cells by mediating the translocation of KRAS from the endoplasmic reticulum to the plasma membrane (PM) and its association with the PM. Contributes to enhanced immune responses by inducing dendrite protrusion of small intestinal CX3CR1(+) phagocytes for the uptake of luminal antigens. Also acts as a key receptor for 12-(S)-HETE-mediated liver ischemia reperfusion injury. Its function is as follows. Proton-sensing G protein-coupled receptor. This is 12-(S)-hydroxy-5,8,10,14-eicosatetraenoic acid receptor (Gpr31) from Mus musculus (Mouse).